The primary structure comprises 1687 residues: Gag-Pol polyprotein (1687 aa).

The N-myristoyl glycine; by host moiety is linked to residue glycine 2. Disordered stretches follow at residues 107 to 126 (GQDNGRKSAGGRPSAPSRLP), 136 to 195 (LLSE…STVA), 420 to 447 (HKRETEEEKQEREKKETEERERRRDRRQ), and 466 to 485 (GRQAGNLSNRAMRAPREGRP). The PTAP/PSAP motif motif lies at 108-111 (QDNG). A compositionally biased stretch (pro residues) spans 139-153 (EPPPYPTSPPPPPAP). A PPXY motif motif is present at residues 140–143 (PPPY). Residues 408–453 (LQDLIKEAEKVYHKRETEEEKQEREKKETEERERRRDRRQEKNLTK) are a coiled coil. The segment at 490–507 (DQCAYCKERGHWARECPR) adopts a CCHC-type zinc-finger fold. The Peptidase A2 domain maps to 544 to 614 (TEFLVDTGAE…CPAPLLGRDL (71 aa)). The active-site Protease; shared with dimeric partner is aspartate 549. In terms of domain architecture, Reverse transcriptase spans 721–912 (LDLGILVPCQ…EEVTYLGYLL (192 aa)). The Mg(2+) site is built by aspartate 789, aspartate 863, aspartate 864, aspartate 1162, glutamate 1200, aspartate 1221, and aspartate 1291. Positions 1153–1299 (LPGVPAWYTD…ADEAAKQAAQ (147 aa)) constitute an RNase H type-1 domain. Residues 1339 to 1377 (HQLTHLGPDKLLQLVGRTSFHIPNLQSVVREITSKCQVC) form an HHCC-type zinc finger. Residues 1394–1552 (RGDRPGVYWE…TPYEILHGGP (159 aa)) form the Integrase catalytic domain. 2 residues coordinate Mg(2+): aspartate 1405 and aspartate 1464.

As to quaternary structure, homohexamer; further associates as homomultimer. The virus core is composed of a lattice formed from hexagonal rings, each containing six capsid monomers. Interacts (via PPXY motif) with host NEDD4. Interacts (via PSAP motif) with host TSG101. In terms of assembly, the reverse transcriptase is a monomer (Potential). Interacts (via RNase domains) with host release factor ETF1; this interaction is essential for translational readthrough of amber codon between viral gag and pol genes, as well as for viral replication. As to quaternary structure, homodimer. The cofactor is Mg(2+). Post-translationally, specific enzymatic cleavages by the viral protease yield mature proteins. The protease is released by autocatalytic cleavage. The polyprotein is cleaved during and after budding, this process is termed maturation. In terms of processing, phosphorylated on serine residues.

The protein resides in the virion. It is found in the host cell membrane. Its subcellular location is the host late endosome membrane. It localises to the host endosome. The protein localises to the host multivesicular body. The protein resides in the host cytoplasm. It carries out the reaction DNA(n) + a 2'-deoxyribonucleoside 5'-triphosphate = DNA(n+1) + diphosphate. The catalysed reaction is Endonucleolytic cleavage to 5'-phosphomonoester.. With respect to regulation, protease: Most efficiently inhibited by Amprenavir, which is able to block Gag-Pol processing in infected cells. Functionally, plays a role in budding and is processed by the viral protease during virion maturation outside the cell. During budding, it recruits, in a PPXY-dependent or independent manner, Nedd4-like ubiquitin ligases that conjugate ubiquitin molecules to Gag-Pol, or to Gag-Pol binding host factors. Interaction with HECT ubiquitin ligases probably links the viral protein to the host ESCRT pathway and facilitates release. Its function is as follows. Targets Gag and gag-pol polyproteins to the plasma membrane via a multipartite membrane binding signal, that includes its myristoylated N-terminus. Also mediates nuclear localization of the pre-integration complex. In terms of biological role, constituent of the pre-integration complex (PIC) which tethers the latter to mitotic chromosomes. This allows the integration of the viral genome into the host DNA. Forms the spherical core of the virion that encapsulates the genomic RNA-nucleocapsid complex. Functionally, involved in the packaging and encapsidation of two copies of the genome. Binds with high affinity to conserved UCUG elements within the packaging signal, located near the 5'-end of the genome. This binding is dependent on genome dimerization. Acts as a nucleic acid chaperone which is involved in rearrangement of nucleic acid secondary structures during gRNA retrotranscription. Its function is as follows. Protease: The aspartyl protease mediates proteolytic cleavages of Gag and Gag-Pol polyproteins during or shortly after the release of the virion from the plasma membrane. Cleavages take place as an ordered, step-wise cascade to yield mature proteins. This process is called maturation. Displays maximal activity during the budding process just prior to particle release from the cell. In terms of biological role, reverse transcriptase/ribonuclease H: RT is a multifunctional enzyme that converts the viral dimeric RNA genome into dsDNA in the cytoplasm, shortly after virus entry into the cell. This enzyme displays a DNA polymerase activity that can copy either DNA or RNA templates, and a ribonuclease H (RNase H) activity that cleaves the RNA strand of RNA-DNA heteroduplexes in a partially processive 3' to 5' endonucleasic mode. Conversion of viral genomic RNA into dsDNA requires many steps. A tRNA binds to the primer-binding site (PBS) situated at the 5' end of the viral RNA. RT uses the 3' end of the tRNA primer to perform a short round of RNA-dependent minus-strand DNA synthesis. The reading proceeds through the U5 region and ends after the repeated (R) region which is present at both ends of viral RNA. The portion of the RNA-DNA heteroduplex is digested by the RNase H, resulting in a ssDNA product attached to the tRNA primer. This ssDNA/tRNA hybridizes with the identical R region situated at the 3' end of viral RNA. This template exchange, known as minus-strand DNA strong stop transfer, can be either intra- or intermolecular. RT uses the 3' end of this newly synthesized short ssDNA to perform the RNA-dependent minus-strand DNA synthesis of the whole template. RNase H digests the RNA template except for a polypurine tract (PPT) situated at the 5' end of the genome. It is not clear if both polymerase and RNase H activities are simultaneous. RNase H probably can proceed both in a polymerase-dependent (RNA cut into small fragments by the same RT performing DNA synthesis) and a polymerase-independent mode (cleavage of remaining RNA fragments by free RTs). Secondly, RT performs DNA-directed plus-strand DNA synthesis using the PPT that has not been removed by RNase H as primers. PPT and tRNA primers are then removed by RNase H. The 3' and 5' ssDNA PBS regions hybridize to form a circular dsDNA intermediate. Strand displacement synthesis by RT to the PBS and PPT ends produces a blunt ended, linear dsDNA copy of the viral genome that includes long terminal repeats (LTRs) at both ends. Catalyzes viral DNA integration into the host chromosome, by performing a series of DNA cutting and joining reactions. This enzyme activity takes place after virion entry into a cell and reverse transcription of the RNA genome in dsDNA. The first step in the integration process is 3' processing. This step requires a complex comprising the viral genome, matrix protein and integrase. This complex is called the pre-integration complex (PIC). The integrase protein removes 2 nucleotides from each 3' end of the viral DNA, leaving recessed CA OH's at the 3' ends. In the second step that requires cell division, the PIC enters cell nucleus. In the third step, termed strand transfer, the integrase protein joins the previously processed 3' ends to the 5' ends of strands of target cellular DNA at the site of integration. The last step is viral DNA integration into host chromosome. The protein is Gag-Pol polyprotein (pro-pol) of Phascolarctos cinereus (Koala).